Here is a 104-residue protein sequence, read N- to C-terminus: ATP-dependent Clp protease adapter protein ClpS (104 aa).

It belongs to the ClpS family. In terms of assembly, binds to the N-terminal domain of the chaperone ClpA.

Functionally, involved in the modulation of the specificity of the ClpAP-mediated ATP-dependent protein degradation. This chain is ATP-dependent Clp protease adapter protein ClpS, found in Paraburkholderia xenovorans (strain LB400).